We begin with the raw amino-acid sequence, 439 residues long: ATP-dependent protease ATPase subunit HslU (439 aa).

Residues Ile17, 59-64 (GVGKTE), Asp251, Glu317, and Arg389 each bind ATP.

It belongs to the ClpX chaperone family. HslU subfamily. A double ring-shaped homohexamer of HslV is capped on each side by a ring-shaped HslU homohexamer. The assembly of the HslU/HslV complex is dependent on binding of ATP.

It localises to the cytoplasm. Functionally, ATPase subunit of a proteasome-like degradation complex; this subunit has chaperone activity. The binding of ATP and its subsequent hydrolysis by HslU are essential for unfolding of protein substrates subsequently hydrolyzed by HslV. HslU recognizes the N-terminal part of its protein substrates and unfolds these before they are guided to HslV for hydrolysis. The protein is ATP-dependent protease ATPase subunit HslU of Campylobacter jejuni subsp. doylei (strain ATCC BAA-1458 / RM4099 / 269.97).